Consider the following 220-residue polypeptide: Ribosomal RNA small subunit methyltransferase Nep1 (220 aa).

Residues glycine 178, glycine 183, and 196-201 (IYKEPL) each bind S-adenosyl-L-methionine.

The protein belongs to the class IV-like SAM-binding methyltransferase superfamily. RNA methyltransferase NEP1 family. Homodimer.

It carries out the reaction a pseudouridine in rRNA + S-adenosyl-L-methionine = an N(1)-methylpseudouridine in rRNA + S-adenosyl-L-homocysteine + H(+). Functionally, methyltransferase involved in ribosomal biogenesis. Specifically catalyzes the N1-methylation of the pseudouridine corresponding to position 914 in M.jannaschii 16S rRNA. The polypeptide is Ribosomal RNA small subunit methyltransferase Nep1 (Thermococcus sibiricus (strain DSM 12597 / MM 739)).